The sequence spans 140 residues: Fluoride-specific ion channel FluC 1 (140 aa).

4 consecutive transmembrane segments (helical) span residues 3-23 (TGAT…GAAA), 38-58 (APLW…GLVL), 80-100 (ILYP…STVM), and 113-133 (IAGV…ALWC). Gly-91 and Thr-94 together coordinate Na(+).

Belongs to the fluoride channel Fluc/FEX (TC 1.A.43) family.

It is found in the cell membrane. The catalysed reaction is fluoride(in) = fluoride(out). Na(+) is not transported, but it plays an essential structural role and its presence is essential for fluoride channel function. Functionally, fluoride-specific ion channel. Important for reducing fluoride concentration in the cell, thus reducing its toxicity. In Corynebacterium jeikeium (strain K411), this protein is Fluoride-specific ion channel FluC 1.